A 321-amino-acid polypeptide reads, in one-letter code: Cytochrome f (321 aa).

The N-terminal stretch at 1–37 (MKIYRQIKQSFSITKIVFSFFISLLLNLVAQPTICQA) is a signal peptide. Phe-38, Cys-58, Cys-61, and His-62 together coordinate heme. The helical transmembrane segment at 287 to 306 (VQGLIAFFISVVLAQIFLVL) threads the bilayer.

Belongs to the cytochrome f family. In terms of assembly, the 4 large subunits of the cytochrome b6-f complex are cytochrome b6, subunit IV (17 kDa polypeptide, petD), cytochrome f and the Rieske protein, while the 4 small subunits are PetG, PetL, PetM and PetN. The complex functions as a dimer. The cofactor is heme.

The protein localises to the plastid. The protein resides in the cyanelle thylakoid membrane. In terms of biological role, component of the cytochrome b6-f complex, which mediates electron transfer between photosystem II (PSII) and photosystem I (PSI), cyclic electron flow around PSI, and state transitions. The chain is Cytochrome f (petA) from Cyanophora paradoxa.